A 147-amino-acid polypeptide reads, in one-letter code: Hemoglobin subunit beta-1 (147 aa).

Residues 3 to 147 (EWTAAERRHV…VVSALGRQYH (145 aa)) enclose the Globin domain. Heme b is bound by residues histidine 64 and histidine 93.

It belongs to the globin family. In terms of assembly, hb 1 is a heterotetramer of two alpha-1 and two beta-1 chains. As to expression, red blood cells.

Involved in oxygen transport from gills to the various peripheral tissues. This Gadus morhua (Atlantic cod) protein is Hemoglobin subunit beta-1 (hbb1).